The chain runs to 398 residues: Argininosuccinate synthase (398 aa).

Ala-8–Ser-16 lines the ATP pocket. Tyr-87 serves as a coordination point for L-citrulline. ATP is bound at residue Gly-117. The L-aspartate site is built by Thr-119, Asn-123, and Asp-124. Asn-123 lines the L-citrulline pocket. Residues Arg-127, Ser-175, Glu-260, and Tyr-272 each coordinate L-citrulline.

It belongs to the argininosuccinate synthase family. Type 1 subfamily. Homotetramer.

It is found in the cytoplasm. It carries out the reaction L-citrulline + L-aspartate + ATP = 2-(N(omega)-L-arginino)succinate + AMP + diphosphate + H(+). The protein operates within amino-acid biosynthesis; L-arginine biosynthesis; L-arginine from L-ornithine and carbamoyl phosphate: step 2/3. In Mycobacterium avium (strain 104), this protein is Argininosuccinate synthase.